The chain runs to 284 residues: Protein phosphatase 1 regulatory subunit 3B (284 aa).

The PP1-binding motif signature appears at 61 to 64 (RVSF). A CBM21 domain is found at 124–232 (RNRLQTDHVC…SNKGKNYRII (109 aa)). Serine 260 is subject to Phosphoserine.

Interacts with glycogen, PPP1CC catalytic subunit of PP1 and PYGL. Associates with glycogen particles. Forms complexes with debranching enzyme, glycogen phosphorylase, glycogen synthase and phosphorylase kinase which is necessary for its regulation of PP1 activity.

Acts as a glycogen-targeting subunit for phosphatase PP1. Facilitates interaction of the PP1 with enzymes of the glycogen metabolism and regulates its activity. Suppresses the rate at which PP1 dephosphorylates (inactivates) glycogen phosphorylase and enhances the rate at which it activates glycogen synthase and therefore limits glycogen breakdown. Its activity is inhibited by PYGL, resulting in inhibition of the glycogen synthase and glycogen phosphorylase phosphatase activities of PP1. Dramatically increases basal and insulin-stimulated glycogen synthesis upon overexpression in hepatocytes. The polypeptide is Protein phosphatase 1 regulatory subunit 3B (PPP1R3B) (Bos taurus (Bovine)).